A 334-amino-acid polypeptide reads, in one-letter code: Holliday junction branch migration complex subunit RuvB (334 aa).

The interval 4–184 (ADRLISAAVI…FGIVQRLEFY (181 aa)) is large ATPase domain (RuvB-L). Residues Ile-23, Arg-24, Gly-65, Lys-68, Thr-69, Thr-70, 131 to 133 (EDY), Arg-174, Tyr-184, and Arg-221 contribute to the ATP site. Position 69 (Thr-69) interacts with Mg(2+). The interval 185 to 255 (PVADLEHIVS…VAMKALDMLN (71 aa)) is small ATPAse domain (RuvB-S). Positions 258-334 (AEGFDFMDRK…YKHFGITREE (77 aa)) are head domain (RuvB-H). DNA contacts are provided by Arg-294, Arg-313, and Arg-318.

Belongs to the RuvB family. Homohexamer. Forms an RuvA(8)-RuvB(12)-Holliday junction (HJ) complex. HJ DNA is sandwiched between 2 RuvA tetramers; dsDNA enters through RuvA and exits via RuvB. An RuvB hexamer assembles on each DNA strand where it exits the tetramer. Each RuvB hexamer is contacted by two RuvA subunits (via domain III) on 2 adjacent RuvB subunits; this complex drives branch migration. In the full resolvosome a probable DNA-RuvA(4)-RuvB(12)-RuvC(2) complex forms which resolves the HJ.

It is found in the cytoplasm. It catalyses the reaction ATP + H2O = ADP + phosphate + H(+). The RuvA-RuvB-RuvC complex processes Holliday junction (HJ) DNA during genetic recombination and DNA repair, while the RuvA-RuvB complex plays an important role in the rescue of blocked DNA replication forks via replication fork reversal (RFR). RuvA specifically binds to HJ cruciform DNA, conferring on it an open structure. The RuvB hexamer acts as an ATP-dependent pump, pulling dsDNA into and through the RuvAB complex. RuvB forms 2 homohexamers on either side of HJ DNA bound by 1 or 2 RuvA tetramers; 4 subunits per hexamer contact DNA at a time. Coordinated motions by a converter formed by DNA-disengaged RuvB subunits stimulates ATP hydrolysis and nucleotide exchange. Immobilization of the converter enables RuvB to convert the ATP-contained energy into a lever motion, pulling 2 nucleotides of DNA out of the RuvA tetramer per ATP hydrolyzed, thus driving DNA branch migration. The RuvB motors rotate together with the DNA substrate, which together with the progressing nucleotide cycle form the mechanistic basis for DNA recombination by continuous HJ branch migration. Branch migration allows RuvC to scan DNA until it finds its consensus sequence, where it cleaves and resolves cruciform DNA. The sequence is that of Holliday junction branch migration complex subunit RuvB from Yersinia pestis bv. Antiqua (strain Angola).